Consider the following 261-residue polypeptide: Zinc import ATP-binding protein ZnuC (261 aa).

Positions 6–221 constitute an ABC transporter domain; the sequence is IRLEQVGVTF…PAFVELFGKN (216 aa). ATP is bound at residue 38 to 45; that stretch reads GPNGAGKT.

It belongs to the ABC transporter superfamily. Zinc importer (TC 3.A.1.15.5) family. The complex is composed of two ATP-binding proteins (ZnuC), two transmembrane proteins (ZnuB) and a solute-binding protein (ZnuA).

Its subcellular location is the cell inner membrane. It carries out the reaction Zn(2+)(out) + ATP(in) + H2O(in) = Zn(2+)(in) + ADP(in) + phosphate(in) + H(+)(in). Functionally, part of the ABC transporter complex ZnuABC involved in zinc import. Responsible for energy coupling to the transport system. The sequence is that of Zinc import ATP-binding protein ZnuC from Pseudomonas fluorescens (strain ATCC BAA-477 / NRRL B-23932 / Pf-5).